Here is a 543-residue protein sequence, read N- to C-terminus: T-complex protein 1 subunit eta (543 aa).

An N-acetylmethionine modification is found at Met1. Gly41 contributes to the ADP binding site. Gly41 is a binding site for ATP. Lys67 is modified (N6-acetyllysine). Asp92 contacts Mg(2+). ADP contacts are provided by Gly93, Thr94, Thr95, Ser96, Ser164, and Ser165. Gly93 contributes to the ATP binding site. Ser96 lines the ATP pocket. An N6-acetyllysine mark is found at Lys250 and Lys320. Residues Arg398 and Gly409 each coordinate ATP. Gly409 is a binding site for ADP. Lys430 participates in a covalent cross-link: Glycyl lysine isopeptide (Lys-Gly) (interchain with G-Cter in SUMO2). Residues Glu494 and Arg499 each contribute to the ADP site. Arg499 lines the ATP pocket. The segment at Arg524 to His543 is disordered. Residue Arg535 is modified to Omega-N-methylarginine.

The protein belongs to the TCP-1 chaperonin family. As to quaternary structure, component of the chaperonin-containing T-complex (TRiC), a hexadecamer composed of two identical back-to-back stacked rings enclosing a protein folding chamber. Each ring is made up of eight different subunits: TCP1/CCT1, CCT2, CCT3, CCT4, CCT5, CCT6A/CCT6, CCT7, CCT8. Interacts with PACRG. Interacts with DLEC1.

It localises to the cytoplasm. The catalysed reaction is ATP + H2O = ADP + phosphate + H(+). Functionally, component of the chaperonin-containing T-complex (TRiC), a molecular chaperone complex that assists the folding of actin, tubulin and other proteins upon ATP hydrolysis. The TRiC complex mediates the folding of WRAP53/TCAB1, thereby regulating telomere maintenance. The sequence is that of T-complex protein 1 subunit eta (CCT7) from Homo sapiens (Human).